A 92-amino-acid chain; its full sequence is Small ribosomal subunit protein uS19c (92 aa).

Belongs to the universal ribosomal protein uS19 family.

The protein resides in the plastid. It localises to the chloroplast. Functionally, protein S19 forms a complex with S13 that binds strongly to the 16S ribosomal RNA. The polypeptide is Small ribosomal subunit protein uS19c (rps19) (Picea abies (Norway spruce)).